A 91-amino-acid polypeptide reads, in one-letter code: MTRSAKKGPFIDAHLLKKVEAAAGGKDKKPIKTWSRRSTILPDFIGLTIAVHNGRQHVPVYVTENMVGHKLGEFALTRTFKGHAADKKAKR.

It belongs to the universal ribosomal protein uS19 family.

In terms of biological role, protein S19 forms a complex with S13 that binds strongly to the 16S ribosomal RNA. This Ralstonia nicotianae (strain ATCC BAA-1114 / GMI1000) (Ralstonia solanacearum) protein is Small ribosomal subunit protein uS19.